The primary structure comprises 121 residues: uncharacterized protein (121 aa).

2 disordered regions span residues 38–76 (NQMAQKRNKQSKKPKQTSKGVKKSSKQNKNSSKNNKYQQ) and 91–121 (SVLRSAHNSGSKMSDISNSIQLLSMTKKQEN). Over residues 43 to 63 (KRNKQSKKPKQTSKGVKKSSK) the composition is skewed to basic residues. Residues 64 to 76 (QNKNSSKNNKYQQ) are compositionally biased toward low complexity.

This is an uncharacterized protein from Schizosaccharomyces pombe (strain 972 / ATCC 24843) (Fission yeast).